Reading from the N-terminus, the 419-residue chain is Gamma-glutamyl phosphate reductase (419 aa).

This sequence belongs to the gamma-glutamyl phosphate reductase family.

It is found in the cytoplasm. It carries out the reaction L-glutamate 5-semialdehyde + phosphate + NADP(+) = L-glutamyl 5-phosphate + NADPH + H(+). Its pathway is amino-acid biosynthesis; L-proline biosynthesis; L-glutamate 5-semialdehyde from L-glutamate: step 2/2. In terms of biological role, catalyzes the NADPH-dependent reduction of L-glutamate 5-phosphate into L-glutamate 5-semialdehyde and phosphate. The product spontaneously undergoes cyclization to form 1-pyrroline-5-carboxylate. The polypeptide is Gamma-glutamyl phosphate reductase (Ruthia magnifica subsp. Calyptogena magnifica).